We begin with the raw amino-acid sequence, 370 residues long: Protein RKD5 (370 aa).

Positions 193–232 (DSETESEESVNEKTEHSEFENDKTEQSESDAKTEILKKKK) are disordered. The span at 202–228 (VNEKTEHSEFENDKTEQSESDAKTEIL) shows a compositional bias: basic and acidic residues. The 86-residue stretch at 224 to 309 (KTEILKKKKR…AEKQQEKNEA (86 aa)) folds into the RWP-RK domain. Positions 283-328 (HRKIKSLDCLIHDLQREAEKQQEKNEAAAMAVAKKQEKLETEKRNI) form a coiled coil. Residues 347–370 (NFKKRHRASRAKKNQESLVTSSST) are disordered. The span at 349-358 (KKRHRASRAK) shows a compositional bias: basic residues.

Its subcellular location is the nucleus. Its function is as follows. Putative transcription factor. This chain is Protein RKD5 (RKD5), found in Arabidopsis thaliana (Mouse-ear cress).